Reading from the N-terminus, the 1571-residue chain is Disco-interacting protein 2 homolog A (1571 aa).

The DMAP1-binding domain maps to 9 to 127 (EAAPLPAEVR…KRRSVLVHSS (119 aa)). A disordered region spans residues 60-203 (LQAENRIPGP…APSAAATPGA (144 aa)). A compositionally biased stretch (basic and acidic residues) spans 86 to 98 (ASRDERFRSDVHT). Phosphoserine is present on serine 94. 2 stretches are compositionally biased toward polar residues: residues 127–139 (SVET…TSSA) and 152–162 (LTSTPLQSHSS). 2 positions are modified to phosphothreonine: threonine 132 and threonine 155. Positions 174–203 (SSTSSSASSTSSHPGGRPTTAPSAAATPGA) are enriched in low complexity. Short sequence motifs (PXXP motif; required for interaction with CTTN) lie at residues 283–286 (PKRP) and 307–310 (PNQP). Positions 302–327 (VQQPDPNQPKPEGSETSVLRGEPLTA) are disordered.

It belongs to the DIP2 family. In terms of assembly, interacts with FSTL1; DIP2A may act as a cell surface receptor for FSTL1. Interacts (via N-terminus) with CTTN (via SH3 domain); the interaction promotes acetylation of CTTN and is required for proper synaptic transmission. Interacts with SHANK3. As to expression, low expression in all tissues tested.

It is found in the cell membrane. The protein resides in the mitochondrion. Its subcellular location is the cell projection. The protein localises to the dendritic spine. It catalyses the reaction acetate + ATP + CoA = acetyl-CoA + AMP + diphosphate. In terms of biological role, catalyzes the de novo synthesis of acetyl-CoA in vitro. Promotes acetylation of CTTN, possibly by providing the acetyl donor, ensuring correct dendritic spine morphology and synaptic transmission. Binds to follistatin-related protein FSTL1 and may act as a cell surface receptor for FSTL1, contributing to AKT activation and subsequent FSTL1-induced survival and function of endothelial cells and cardiac myocytes. The chain is Disco-interacting protein 2 homolog A (DIP2A) from Homo sapiens (Human).